A 267-amino-acid polypeptide reads, in one-letter code: Small ribosomal subunit protein uS2 (267 aa).

The interval 1–72 (MSGNEKEGLD…QLDEDVMPDE (72 aa)) is disordered. A compositionally biased stretch (acidic residues) spans 10–72 (DASDSDFDPS…QLDEDVMPDE (63 aa)).

This sequence belongs to the universal ribosomal protein uS2 family. Post-translationally, the N-terminus is blocked.

This chain is Small ribosomal subunit protein uS2 (rps2), found in Haloarcula marismortui (strain ATCC 43049 / DSM 3752 / JCM 8966 / VKM B-1809) (Halobacterium marismortui).